The sequence spans 134 residues: Replication enhancer protein (134 aa).

It belongs to the geminiviridae replication enhancer protein family. Homooligomer. Interacts with the replication-associated protein (REP). Interacts with host proliferating cell nuclear antigen (PCNA). Interacts with host retinoblastoma-related protein 1 (RBR1), and may thereby deregulate the host cell cycle. Oligomerization and interaction with PCNA are necessary for optimal replication enhancement.

In terms of biological role, increases viral DNA accumulation. Enhances infectivity and symptom expression. This is Replication enhancer protein from Tomato yellow leaf curl Sardinia virus (TYLCSV).